The sequence spans 342 residues: Dihydroorotase (342 aa).

Residues His-13 and His-15 each coordinate Zn(2+). Substrate-binding positions include His-15–Arg-17 and Asn-41. Residues Lys-98, His-135, and His-173 each coordinate Zn(2+). Residue Lys-98 is modified to N6-carboxylysine. His-135 contacts substrate. Position 218 (Leu-218) interacts with substrate. Asp-246 contributes to the Zn(2+) binding site. Residue Asp-246 is part of the active site. The substrate site is built by His-250 and Ala-262.

The protein belongs to the metallo-dependent hydrolases superfamily. DHOase family. Class II DHOase subfamily. Homodimer. Zn(2+) is required as a cofactor.

It catalyses the reaction (S)-dihydroorotate + H2O = N-carbamoyl-L-aspartate + H(+). Its pathway is pyrimidine metabolism; UMP biosynthesis via de novo pathway; (S)-dihydroorotate from bicarbonate: step 3/3. Functionally, catalyzes the reversible cyclization of carbamoyl aspartate to dihydroorotate. In Aliivibrio salmonicida (strain LFI1238) (Vibrio salmonicida (strain LFI1238)), this protein is Dihydroorotase.